The sequence spans 287 residues: N-acetylmannosamine kinase (287 aa).

ATP contacts are provided by residues 5-12 (AIDIGGTK) and 131-138 (GVGGGIII). 4 residues coordinate Zn(2+): His155, Cys165, Cys167, and Cys172.

This sequence belongs to the ROK (NagC/XylR) family. NanK subfamily. As to quaternary structure, homodimer.

It carries out the reaction an N-acyl-D-mannosamine + ATP = an N-acyl-D-mannosamine 6-phosphate + ADP + H(+). The protein operates within amino-sugar metabolism; N-acetylneuraminate degradation; D-fructose 6-phosphate from N-acetylneuraminate: step 2/5. Catalyzes the phosphorylation of N-acetylmannosamine (ManNAc) to ManNAc-6-P. The sequence is that of N-acetylmannosamine kinase from Vibrio cholerae serotype O1 (strain ATCC 39541 / Classical Ogawa 395 / O395).